Consider the following 251-residue polypeptide: MNLNSIPAFQDNYIWVLNNDEGRCVIVDPGEAAPVLKAIDDHKWIPEAIFLTHHHHDHVGGVKELLQHFPQMTVYGPTETQDKGATHLVGDGDTVLVLGYNFSIFATPGHTLGHICYFSHPYLFCGDTLFSGGCGRLFEGTALQMYQSLMKINTLPDDTLICSAHEYTLANLKFALSILPHDSFINEYYRKVNELRVKKQMTLPVILKNERKINLFLRTEDIDLINEINKETILQQPEARFAWLRSKKDTF.

Zn(2+) contacts are provided by histidine 53, histidine 55, aspartate 57, histidine 58, histidine 110, aspartate 127, and histidine 165.

It belongs to the metallo-beta-lactamase superfamily. Glyoxalase II family. Monomer. Requires Zn(2+) as cofactor.

It carries out the reaction an S-(2-hydroxyacyl)glutathione + H2O = a 2-hydroxy carboxylate + glutathione + H(+). The protein operates within secondary metabolite metabolism; methylglyoxal degradation; (R)-lactate from methylglyoxal: step 2/2. Thiolesterase that catalyzes the hydrolysis of S-D-lactoyl-glutathione to form glutathione and D-lactic acid. The polypeptide is Hydroxyacylglutathione hydrolase (Salmonella arizonae (strain ATCC BAA-731 / CDC346-86 / RSK2980)).